Consider the following 318-residue polypeptide: UDP-N-acetylenolpyruvoylglucosamine reductase (318 aa).

In terms of domain architecture, FAD-binding PCMH-type spans 38–204; it reads IGGVCPVIVE…LGIEILLKEG (167 aa). The active site involves Arg-182. Residues 212–229 show a composition bias toward basic and acidic residues; that stretch reads SLKDKRDRRNSSQPENKK. Residues 212 to 232 are disordered; that stretch reads SLKDKRDRRNSSQPENKKSAG. The active-site Proton donor is Ser-233. The active site involves Glu-310.

It belongs to the MurB family. Requires FAD as cofactor.

The protein resides in the cytoplasm. The catalysed reaction is UDP-N-acetyl-alpha-D-muramate + NADP(+) = UDP-N-acetyl-3-O-(1-carboxyvinyl)-alpha-D-glucosamine + NADPH + H(+). Its pathway is cell wall biogenesis; peptidoglycan biosynthesis. Cell wall formation. This Leptospira interrogans serogroup Icterohaemorrhagiae serovar copenhageni (strain Fiocruz L1-130) protein is UDP-N-acetylenolpyruvoylglucosamine reductase.